The chain runs to 176 residues: Inner membrane-spanning protein YciB (176 aa).

The next 5 helical transmembrane spans lie at 24–44 (TATAVAIGATLVQIAWVAFRH), 49–69 (PMLWVSLGVVTVFGGATLVLH), 76–96 (WKPTVLYWAFSVVLVVSALGF), 121–141 (YVWAVFFVLLGILNLFVAYNF), and 149–169 (FKLFGATGCLVVFIVGQSLWL).

This sequence belongs to the YciB family.

It localises to the cell inner membrane. In terms of biological role, plays a role in cell envelope biogenesis, maintenance of cell envelope integrity and membrane homeostasis. This chain is Inner membrane-spanning protein YciB, found in Paraburkholderia phymatum (strain DSM 17167 / CIP 108236 / LMG 21445 / STM815) (Burkholderia phymatum).